The following is a 201-amino-acid chain: MQELAPRQQQVLAFITGFIAENGYPPTLREIAAHLKISGTLGVSKHLEALERKGYLRREANSSRGIALVGRTDTALSLPVAGVVRAGLPQPAVEDIEEYFAIDRSMVRGGTFFLRVKGDSMINAAIVEGDLALVRPQATAENRDIVVAMVDGEATLKRFYRQRDQIRLQPENPNMDPIIIRPGEGDVAIIGKVVGIYRPLE.

A DNA-binding region (H-T-H motif) is located at residues 28 to 48; it reads LREIAAHLKISGTLGVSKHLE. Active-site for autocatalytic cleavage activity residues include serine 120 and lysine 157.

The protein belongs to the peptidase S24 family. In terms of assembly, homodimer.

The enzyme catalyses Hydrolysis of Ala-|-Gly bond in repressor LexA.. Represses a number of genes involved in the response to DNA damage (SOS response), including recA and lexA. In the presence of single-stranded DNA, RecA interacts with LexA causing an autocatalytic cleavage which disrupts the DNA-binding part of LexA, leading to derepression of the SOS regulon and eventually DNA repair. This Geobacter sulfurreducens (strain ATCC 51573 / DSM 12127 / PCA) protein is LexA repressor 1.